Consider the following 507-residue polypeptide: Probable malate:quinone oxidoreductase 2 (507 aa).

This sequence belongs to the MQO family. It depends on FAD as a cofactor.

The enzyme catalyses (S)-malate + a quinone = a quinol + oxaloacetate. The protein operates within carbohydrate metabolism; tricarboxylic acid cycle; oxaloacetate from (S)-malate (quinone route): step 1/1. The sequence is that of Probable malate:quinone oxidoreductase 2 from Pseudomonas aeruginosa (strain ATCC 15692 / DSM 22644 / CIP 104116 / JCM 14847 / LMG 12228 / 1C / PRS 101 / PAO1).